Here is a 316-residue protein sequence, read N- to C-terminus: Protein lifeguard 2 (316 aa).

Residues 1-53 (MTQGKLSVANKAPGTEGQQQVHGEKKEAPAVPSAPPSYEEATSGEGMKAGAFP) form a disordered region. A run of 3 helical transmembrane segments spans residues 106-126 (VYTI…LFTF), 138-158 (PGWY…LACC), and 165-185 (FPWN…LTGM). N-linked (GlcNAc...) asparagine glycosylation is present at N191. 4 consecutive transmembrane segments (helical) span residues 194-214 (SVLL…VFSF), 225-245 (GVLF…AILL), 250-270 (VPWL…LFLA), and 290-310 (IFGA…FLQL).

This sequence belongs to the BI1 family. LFG subfamily. As to quaternary structure, interacts with FAS/TNFRSF6 and BAX. As to expression, highly expressed in breast carcinoma tissues. Enhanced expression correlates with the grade of the tumor (grade II/grade III) in primary breast tumors (at protein level). Widely expressed. Expressed at high levels in the brain especially in the hippocampus.

It is found in the cell membrane. It localises to the membrane raft. Its subcellular location is the postsynaptic cell membrane. In terms of biological role, antiapoptotic protein which protects cells uniquely from Fas-induced apoptosis. Regulates Fas-mediated apoptosis in neurons by interfering with caspase-8 activation. May play a role in cerebellar development by affecting cerebellar size, internal granular layer (IGL) thickness, and Purkinje cell (PC) development. The polypeptide is Protein lifeguard 2 (FAIM2) (Homo sapiens (Human)).